We begin with the raw amino-acid sequence, 337 residues long: Hairy/enhancer-of-split related with YRPW motif protein 2 (337 aa).

The interval 1–52 (MKRPCEETTSESDMDETIDVGSENNYSGQSTSSVIRLNSPTTTSQIMARKKR) is disordered. The segment covering 8-18 (TTSESDMDETI) has biased composition (acidic residues). The span at 22 to 46 (SENNYSGQSTSSVIRLNSPTTTSQI) shows a compositional bias: polar residues. The segment at 47–116 (MARKKRRGII…GGKGYFDAHA (70 aa)) is transcriptional repression and interaction with NCOR1 and SIN3A. A bHLH domain is found at 48-103 (ARKKRRGIIEKRRRDRINNSLSELRRLVPTAFEKQGSAKLEKAEILQMTVDHLKML). One can recognise an Orange domain in the interval 122–157 (MSIGFRECLTEVARYLSSVEGLDSSDPLRVRLVSHL). Residues 307 to 325 (LSVSATSSPQQTSSGTNNK) are compositionally biased toward polar residues. The disordered stretch occupies residues 307-337 (LSVSATSSPQQTSSGTNNKPYRPWGTEVGAF). The short motif at 327 to 330 (YRPW) is the YRPW motif element.

Belongs to the HEY family. As to quaternary structure, may self-associate. Interacts with GATA4, HES1 and HEYL. Interacts with HDAC1, NCOR1 and SIN3A. Interacts with ARNT and GATA6.

It is found in the nucleus. Downstream effector of Notch signaling which may be required for cardiovascular development. Transcriptional repressor which binds preferentially to the canonical E box sequence 5'-CACGTG-3'. Represses transcription by the cardiac transcriptional activators GATA4 and GATA6. This Homo sapiens (Human) protein is Hairy/enhancer-of-split related with YRPW motif protein 2 (HEY2).